The chain runs to 404 residues: S-adenosylmethionine synthase (404 aa).

139-144 (GKGSTD) is an ATP binding site.

It belongs to the AdoMet synthase 2 family. Mg(2+) serves as cofactor.

It carries out the reaction L-methionine + ATP + H2O = S-adenosyl-L-methionine + phosphate + diphosphate. It functions in the pathway amino-acid biosynthesis; S-adenosyl-L-methionine biosynthesis; S-adenosyl-L-methionine from L-methionine: step 1/1. In terms of biological role, catalyzes the formation of S-adenosylmethionine from methionine and ATP. The chain is S-adenosylmethionine synthase from Saccharolobus islandicus (strain Y.N.15.51 / Yellowstone #2) (Sulfolobus islandicus).